The sequence spans 461 residues: Bifunctional protein HldE (461 aa).

A ribokinase region spans residues 1–312; it reads MLEFLSQQKP…IKSFNRVDFE (312 aa). An ATP-binding site is contributed by 191-194; the sequence is NKKE. The active site involves D259. The interval 334–461 is cytidylyltransferase; it reads FTNGCFDIVH…KIIEKIKDKK (128 aa).

The protein in the N-terminal section; belongs to the carbohydrate kinase PfkB family. This sequence in the C-terminal section; belongs to the cytidylyltransferase family. In terms of assembly, homodimer.

It carries out the reaction D-glycero-beta-D-manno-heptose 7-phosphate + ATP = D-glycero-beta-D-manno-heptose 1,7-bisphosphate + ADP + H(+). The enzyme catalyses D-glycero-beta-D-manno-heptose 1-phosphate + ATP + H(+) = ADP-D-glycero-beta-D-manno-heptose + diphosphate. It functions in the pathway nucleotide-sugar biosynthesis; ADP-L-glycero-beta-D-manno-heptose biosynthesis; ADP-L-glycero-beta-D-manno-heptose from D-glycero-beta-D-manno-heptose 7-phosphate: step 1/4. Its pathway is nucleotide-sugar biosynthesis; ADP-L-glycero-beta-D-manno-heptose biosynthesis; ADP-L-glycero-beta-D-manno-heptose from D-glycero-beta-D-manno-heptose 7-phosphate: step 3/4. Its function is as follows. Catalyzes the phosphorylation of D-glycero-D-manno-heptose 7-phosphate at the C-1 position to selectively form D-glycero-beta-D-manno-heptose-1,7-bisphosphate. Functionally, catalyzes the ADP transfer from ATP to D-glycero-beta-D-manno-heptose 1-phosphate, yielding ADP-D-glycero-beta-D-manno-heptose. The sequence is that of Bifunctional protein HldE from Campylobacter jejuni subsp. jejuni serotype O:6 (strain 81116 / NCTC 11828).